The following is a 193-amino-acid chain: uncharacterized protein (193 aa).

The first 22 residues, 1–22, serve as a signal peptide directing secretion; the sequence is MAVQKNVIKGILAGTFALMLSG. Cys23 carries the N-palmitoyl cysteine lipid modification. Cys23 carries the S-diacylglycerol cysteine lipid modification.

Its subcellular location is the cell membrane. This is an uncharacterized protein from Escherichia coli (strain K12).